The chain runs to 167 residues: MASVTSATVAIPSFTGLKASTIKSSATVRIQTAAVASPKLTVKSSLKNFGVAAVAAAASIALAGNAMAIEVLLGGGDGSLAFIPNDFSIAKGEKIVFKNNAGYPHNVVFDEDEIPSGVDVAKISMDEQDLLNGAGETYEVALTEPGTYSFYCAPHQGAGMVGKVTVN.

A chloroplast-targeting transit peptide spans 1-52 (MASVTSATVAIPSFTGLKASTIKSSATVRIQTAAVASPKLTVKSSLKNFGVA). Residues 53 to 68 (AVAAAASIALAGNAMA) constitute a thylakoid transit peptide. One can recognise a Plastocyanin-like domain in the interval 69-167 (IEVLLGGGDG…AGMVGKVTVN (99 aa)). Cu cation contacts are provided by His105, Cys152, His155, and Met160.

The protein belongs to the plastocyanin family. It depends on Cu(2+) as a cofactor.

It localises to the plastid. The protein localises to the chloroplast thylakoid membrane. In terms of biological role, participates in electron transfer between P700 and the cytochrome b6-f complex in photosystem I. Seems to be the major plastocyanin in Arabidopsis. The protein is Plastocyanin major isoform, chloroplastic (DRT112) of Arabidopsis thaliana (Mouse-ear cress).